The chain runs to 264 residues: Fructose-1,6-bisphosphatase/inositol-1-monophosphatase (264 aa).

The Mg(2+) site is built by E70, D86, L88, and D89. Substrate-binding positions include 89–91 (DGT), R185, and A190. D214 serves as a coordination point for Mg(2+).

Belongs to the inositol monophosphatase superfamily. FBPase class 4 family. The cofactor is Mg(2+).

The catalysed reaction is beta-D-fructose 1,6-bisphosphate + H2O = beta-D-fructose 6-phosphate + phosphate. The enzyme catalyses a myo-inositol phosphate + H2O = myo-inositol + phosphate. Its function is as follows. Phosphatase with broad specificity; it can dephosphorylate fructose 1,6-bisphosphate, and both D and L isomers of inositol-1-phosphate (I-1-P). This Aquifex aeolicus (strain VF5) protein is Fructose-1,6-bisphosphatase/inositol-1-monophosphatase (suhB).